We begin with the raw amino-acid sequence, 1322 residues long: MKEDKVLILRTCANNMADHGGIIWPLSGIVECKYWKPVKGFENGLTGLIWGKGSDSPLSLHADARRVVAEVAADECIAIETHGWIKFPRAEVLHVGTQNSAMQFILHHRADYVACTEMQAGPGGPDVTSEAKAGNRSLPVTDDIDATIESGSTQPTQTIEIATYGSTLSGTHQSQLIAGYGSTETAGDSSTLIAGYGSTGTAGSDSTLVAGYGSTQTAGEESSQMAGYGSTQTGMKGSDLTAGYGSTGTAGADSSLIAGYGSTQTAGEDNSLTAGYGSTQTAGEDSSLTAGYGSTQTAQKGSDLTAGYGSTGTAGADSSLIAGYGSTQTAGEESTQTAGYGSTQTAQKGSDLTAGYGSTGTAGDDSSLIAGYGSTQTAGEDSSLTAGYGSTQTAQKGSDLTAGYGSTGTSGADSSLIAGYGSTQTAGEESTQTAGYGSTQTAQKGSDLTAGYGSTGTAGDDSSLIAGYGSTQTAQKGSDLTAGYGSTSTAGYESSLIAGYGSTQTAGYGSTLTAGYGSTQTAQNESDLITGYGSTSTAGANSSLIAGYGSTQTASYNSVLTAGYGSTQTAREGSDLTAGYGSTGTAGSDSSIIAGYGSTSTAGADSSLIAGYGSTQTAGYNSILTAGYGSTQTAEEGSDLTAGYGSTSTAGADSSLIAGYGSTQTAGYNSILTAGYGSTQTAQEGSDLTAGYGSTSTAGADSSLIAGYGSTQTASYHSSLTAGYGSTQTAQEQSVLTTGYGSTSTAGADSSLIAGYGSTQTAGYNSILTAGYGSTQTAQERSDLTTGYGSTSTAGADSSLIAGYGSTQTAGYHSILTAGYGSTQTAQERSDLTTGYGSTSTAGADSSLIAGYGSTQTAGYNSILTAGYGSTQTAQENSDLTTGYGSTSTAGYDSSLIAGYGSTQTAGYHSILTAGYGSTQTARTRSDLTTGYGSTSTAGPDSSLIAGYGSTQTAGYNSILTAGYGSTQTGQENSDLTTGYGSTSTAGYESSLIAGYGSTQTASFKSTLMAGYGSSQTAREQSSLTAGYGSTSMAGYDSSLIAGYGSTQTAGYQSTLTAGYGSTQTAEHSSTLTAGYGSTATAGADSSLIAGYGSSLTSGIRSFLTAGYGSTLISGLRSVLTAGYGSSLISGRRSSLTAGYGSNQIASHRSSLIAGPESTQITGNRSMLIAGKGSSQTAGYRSTLISGADSVQMAGERGKLIAGADSTQTAGDRSKLLAGNNSYLTAGDRSKLTAGNDCILMAGDRSKLTAGINSILTAGCRSKLIGSNGSTLTAGENSVLIFRCWDGKRYTNVVAKTGKGGIEADMPYQMDEDNNIVNKPEE.

The octapeptide periodicity stretch occupies residues 162-1281 (ATYGSTLSGT…LTAGENSVLI (1120 aa)). 4 stretches are compositionally biased toward polar residues: residues 271–302 (SLTA…QKGS), 327–350 (TQTA…QKGS), 373–398 (GSTQ…QKGS), and 423–446 (TQTA…QKGS). Disordered regions lie at residues 271–303 (SLTA…KGSD), 327–358 (TQTA…GYGS), 372–399 (YGST…KGSD), and 423–448 (TQTA…GSDL).

It belongs to the bacterial ice nucleation protein family.

It localises to the cell outer membrane. In terms of biological role, ice nucleation proteins enable bacteria to nucleate crystallization in supercooled water. This is Ice nucleation protein InaA (inaA) from Pantoea ananas (Erwinia uredovora).